A 169-amino-acid chain; its full sequence is Macrocypin-1a (169 aa).

This sequence belongs to the protease inhibitor I85 family.

Inhibits papain and cysteine cathepsin endopeptidases, and also inhibits cathepsins B and H, which exhibit both exopeptidase and endopeptidase activities. This is Macrocypin-1a from Macrolepiota procera (Parasol mushroom).